The chain runs to 123 residues: Large ribosomal subunit protein bL12 (123 aa).

The protein belongs to the bacterial ribosomal protein bL12 family. Homodimer. Part of the ribosomal stalk of the 50S ribosomal subunit. Forms a multimeric L10(L12)X complex, where L10 forms an elongated spine to which 2 to 4 L12 dimers bind in a sequential fashion. Binds GTP-bound translation factors.

Functionally, forms part of the ribosomal stalk which helps the ribosome interact with GTP-bound translation factors. Is thus essential for accurate translation. The polypeptide is Large ribosomal subunit protein bL12 (Neisseria gonorrhoeae (strain NCCP11945)).